Consider the following 80-residue polypeptide: DNA-binding protein S1FA2 (80 aa).

Positions 54-59 (PPRKKK) match the Nuclear localization signal motif. A compositionally biased stretch (basic residues) spans 55–70 (PRKKKPVSKKKMKREK). The disordered stretch occupies residues 55 to 80 (PRKKKPVSKKKMKREKLKQGVSAPGE).

Belongs to the S1FA transcription factor family.

The protein resides in the nucleus. Its function is as follows. DNA-binding protein that specifically recognizes a negative element (S1F) within the RPS1 promoter. The sequence is that of DNA-binding protein S1FA2 (S1FA2) from Oryza sativa subsp. japonica (Rice).